The primary structure comprises 196 residues: Molybdenum cofactor guanylyltransferase (196 aa).

Residues 10–12 (LAG), lysine 23, asparagine 51, aspartate 69, and aspartate 99 contribute to the GTP site. A Mg(2+)-binding site is contributed by aspartate 99.

It belongs to the MobA family. As to quaternary structure, monomer. The cofactor is Mg(2+).

It localises to the cytoplasm. The catalysed reaction is Mo-molybdopterin + GTP + H(+) = Mo-molybdopterin guanine dinucleotide + diphosphate. In terms of biological role, transfers a GMP moiety from GTP to Mo-molybdopterin (Mo-MPT) cofactor (Moco or molybdenum cofactor) to form Mo-molybdopterin guanine dinucleotide (Mo-MGD) cofactor. This Shewanella woodyi (strain ATCC 51908 / MS32) protein is Molybdenum cofactor guanylyltransferase.